A 443-amino-acid polypeptide reads, in one-letter code: Trigger factor (443 aa).

Residues glycine 168–proline 254 form the PPIase FKBP-type domain.

This sequence belongs to the FKBP-type PPIase family. Tig subfamily.

The protein localises to the cytoplasm. The catalysed reaction is [protein]-peptidylproline (omega=180) = [protein]-peptidylproline (omega=0). Functionally, involved in protein export. Acts as a chaperone by maintaining the newly synthesized protein in an open conformation. Functions as a peptidyl-prolyl cis-trans isomerase. The protein is Trigger factor of Syntrophus aciditrophicus (strain SB).